A 353-amino-acid polypeptide reads, in one-letter code: ATP-dependent (S)-NAD(P)H-hydrate dehydratase (353 aa).

The YjeF C-terminal domain maps to 18–345; the sequence is MLARVRQMVP…DEVHTAFLNL (328 aa). The interval 95–121 is disordered; the sequence is RSSPPALSSSDSGSSPSRTKSAPDTDP. The segment covering 96 to 114 has biased composition (low complexity); it reads SSPPALSSSDSGSSPSRTK. (6S)-NADPHX-binding positions include glycine 143 and 196–202; that span reads NVVEFGR. ATP-binding positions include 241 to 245 and 260 to 269; these read KGAKD and GGLKRSGGQG. Aspartate 270 provides a ligand contact to (6S)-NADPHX.

Belongs to the NnrD/CARKD family. The cofactor is Mg(2+).

Its subcellular location is the cytoplasm. It carries out the reaction (6S)-NADHX + ATP = ADP + phosphate + NADH + H(+). The catalysed reaction is (6S)-NADPHX + ATP = ADP + phosphate + NADPH + H(+). Its function is as follows. Catalyzes the dehydration of the S-form of NAD(P)HX at the expense of ATP, which is converted to ADP. Together with NAD(P)HX epimerase, which catalyzes the epimerization of the S- and R-forms, the enzyme allows the repair of both epimers of NAD(P)HX, a damaged form of NAD(P)H that is a result of enzymatic or heat-dependent hydration. The sequence is that of ATP-dependent (S)-NAD(P)H-hydrate dehydratase from Neurospora crassa (strain ATCC 24698 / 74-OR23-1A / CBS 708.71 / DSM 1257 / FGSC 987).